We begin with the raw amino-acid sequence, 465 residues long: Chromosomal replication initiator protein DnaA (465 aa).

The tract at residues 1–87 is domain I, interacts with DnaA modulators; sequence MLWTDCLTRL…RPGSILSSSE (87 aa). The segment at 81–123 is disordered; that stretch reads SILSSSEQPATTTAALQTAPIPQPAKVKREPEPVANTAVSSKS. The segment covering 88–100 has biased composition (low complexity); that stretch reads QPATTTAALQTAP. A domain II region spans residues 88–127; that stretch reads QPATTTAALQTAPIPQPAKVKREPEPVANTAVSSKSSKKK. Residues 128 to 345 are domain III, AAA+ region; it reads LLNPQFTFSL…GALNKVVAIS (218 aa). ATP-binding residues include Gly-173, Gly-175, Lys-176, and Thr-177. The domain IV, binds dsDNA stretch occupies residues 346-465; it reads RFKGAPIDLD…YKNLLRLLQS (120 aa).

This sequence belongs to the DnaA family. In terms of assembly, oligomerizes as a right-handed, spiral filament on DNA at oriC.

The protein localises to the cytoplasm. Functionally, plays an essential role in the initiation and regulation of chromosomal replication. ATP-DnaA binds to the origin of replication (oriC) to initiate formation of the DNA replication initiation complex once per cell cycle. Binds the DnaA box (a 9 base pair repeat at the origin) and separates the double-stranded (ds)DNA. Forms a right-handed helical filament on oriC DNA; dsDNA binds to the exterior of the filament while single-stranded (ss)DNA is stabiized in the filament's interior. The ATP-DnaA-oriC complex binds and stabilizes one strand of the AT-rich DNA unwinding element (DUE), permitting loading of DNA polymerase. After initiation quickly degrades to an ADP-DnaA complex that is not apt for DNA replication. Binds acidic phospholipids. This is Chromosomal replication initiator protein DnaA from Acinetobacter baumannii (strain AB307-0294).